The sequence spans 296 residues: Cbb3-type cytochrome c oxidase subunit CcoP (296 aa).

The Cytoplasmic portion of the chain corresponds to 1–31 (MAQNYKDELSGVETTGHEWDGLRELNNPLPK). Residues 32–52 (WWLYLFYVCIAWAMVYYVFYP) traverse the membrane as a helical segment. The Periplasmic segment spans residues 53-296 (AWPLGKTYTK…VYVHNLGGGK (244 aa)). Cytochrome c domains lie at 108 to 200 (FAMA…LSLN) and 207 to 293 (GKVA…HNLG). Residues C121, C124, H125, M175, C220, C223, H224, and M270 each coordinate heme c.

Belongs to the CcoP / FixP family. As to quaternary structure, component of the cbb3-type cytochrome c oxidase at least composed of CcoN, CcoO, CcoQ and CcoP. Heme c is required as a cofactor.

It localises to the cell inner membrane. Its pathway is energy metabolism; oxidative phosphorylation. Its function is as follows. C-type cytochrome. Part of the cbb3-type cytochrome c oxidase complex. CcoP subunit is required for transferring electrons from donor cytochrome c via its heme groups to CcoO subunit. From there, electrons are shuttled to the catalytic binuclear center of CcoN subunit where oxygen reduction takes place. The complex also functions as a proton pump. This Azospirillum sp. (strain B510) protein is Cbb3-type cytochrome c oxidase subunit CcoP.